We begin with the raw amino-acid sequence, 692 residues long: Putative ESX-1 scaffolding and assembly protein SaeA (692 aa).

The span at 1 to 21 shows a compositional bias: basic and acidic residues; the sequence is MGERGELVSDLHPSDDHDADP. Disordered stretches follow at residues 1-23 and 87-134; these read MGER…DPRL and PAAP…TTGF. A compositionally biased stretch (pro residues) spans 89–107; that stretch reads APEPDPPPVPEPQPEPEPG.

It is found in the cytoplasm. In terms of biological role, may be involved in assembly of the ESX-1 / type VII specialized secretion system (T7SS), which exports several proteins including EsxA and EsxB. Involved in DNA conjugation in recipient (MKD8) but not donor (mc(2)155) strain. The chain is Putative ESX-1 scaffolding and assembly protein SaeA from Mycolicibacterium smegmatis (strain ATCC 700084 / mc(2)155) (Mycobacterium smegmatis).